Reading from the N-terminus, the 185-residue chain is Elongation factor P (185 aa).

Belongs to the elongation factor P family.

The protein localises to the cytoplasm. The protein operates within protein biosynthesis; polypeptide chain elongation. In terms of biological role, involved in peptide bond synthesis. Stimulates efficient translation and peptide-bond synthesis on native or reconstituted 70S ribosomes in vitro. Probably functions indirectly by altering the affinity of the ribosome for aminoacyl-tRNA, thus increasing their reactivity as acceptors for peptidyl transferase. This Synechococcus sp. (strain JA-2-3B'a(2-13)) (Cyanobacteria bacterium Yellowstone B-Prime) protein is Elongation factor P.